Reading from the N-terminus, the 331-residue chain is 5,10-methylenetetrahydromethanopterin reductase (331 aa).

It belongs to the mer family.

The protein localises to the cytoplasm. It carries out the reaction 5-methyl-5,6,7,8-tetrahydromethanopterin + oxidized coenzyme F420-(gamma-L-Glu)(n) + H(+) = 5,10-methylenetetrahydromethanopterin + reduced coenzyme F420-(gamma-L-Glu)(n). Its pathway is one-carbon metabolism; methanogenesis from CO(2); methyl-coenzyme M from 5,10-methylene-5,6,7,8-tetrahydromethanopterin: step 1/2. Catalyzes the reversible reduction of methylene-H(4)MPT to methyl-H(4)MPT. The sequence is that of 5,10-methylenetetrahydromethanopterin reductase from Methanocaldococcus jannaschii (strain ATCC 43067 / DSM 2661 / JAL-1 / JCM 10045 / NBRC 100440) (Methanococcus jannaschii).